Reading from the N-terminus, the 478-residue chain is Stromelysin-1 (478 aa).

The signal sequence occupies residues 1–17; that stretch reads MQNLPALLLFCGVVCSA. Positions 18-99 are cleaved as a propeptide — activation peptide; sequence YPVDRAAEDE…PRCGVPDVGD (82 aa). The short motif at 90–97 is the Cysteine switch element; it reads PRCGVPDV. Cys92 contributes to the Zn(2+) binding site. Residues Asp124 and Asp158 each coordinate Ca(2+). Zn(2+)-binding residues include His168 and Asp170. Ca(2+)-binding residues include Asp175, Gly176, Gly178, and Val180. His183 lines the Zn(2+) pocket. Residues Gly190 and Asp194 each coordinate Ca(2+). Residue His196 coordinates Zn(2+). 3 residues coordinate Ca(2+): Asp198, Asp199, and Glu201. His218 contacts Zn(2+). Residue Glu219 is part of the active site. Residues His222 and His228 each contribute to the Zn(2+) site. Residues 260 to 286 are disordered; sequence QSLYGGPPSDSSNDPVVPTESVPPGPG. Over residues 266-277 the composition is skewed to low complexity; that stretch reads PPSDSSNDPVVP. 4 Hemopexin repeats span residues 288 to 337, 338 to 384, 386 to 434, and 435 to 478; these read PAAC…WPSL, PSGL…GFPP, VKKI…FPGV, and DSKV…WLNC. Cys291 and Cys478 are oxidised to a cystine. A Ca(2+)-binding site is contributed by Asp298. Ca(2+)-binding residues include Asp390 and Asp439. Asn452 is a glycosylation site (N-linked (GlcNAc...) asparagine).

The protein belongs to the peptidase M10A family. Ca(2+) serves as cofactor. Zn(2+) is required as a cofactor.

The protein localises to the secreted. Its subcellular location is the extracellular space. It is found in the extracellular matrix. The enzyme catalyses Preferential cleavage where P1', P2' and P3' are hydrophobic residues.. Its function is as follows. Metalloproteinase with a rather broad substrate specificity that can degrade fibronectin, laminin, gelatins of type I, III, IV, and V; collagens III, IV, X, and IX, and cartilage proteoglycans. Activates different molecules including growth factors, plasminogen or other matrix metalloproteinases such as MMP9. Once released into the extracellular matrix (ECM), the inactive pro-enzyme is activated by the plasmin cascade signaling pathway. Also acts intracellularly. For example, in dopaminergic neurons, gets activated by the serine protease HTRA2 upon stress and plays a pivotal role in DA neuronal degeneration by mediating microglial activation and alpha-synuclein/SNCA cleavage. In addition, plays a role in immune response and possesses antiviral activity against various viruses. Mechanistically, translocates from the cytoplasm into the cell nucleus upon virus infection to influence NF-kappa-B activities. This chain is Stromelysin-1 (MMP3), found in Canis lupus familiaris (Dog).